Here is a 613-residue protein sequence, read N- to C-terminus: DNA mismatch repair protein MutL (613 aa).

The tract at residues 364 to 393 is disordered; that stretch reads EPAVARQPEAPRYSSGASAPRPTGANYPHA.

The protein belongs to the DNA mismatch repair MutL/HexB family.

In terms of biological role, this protein is involved in the repair of mismatches in DNA. It is required for dam-dependent methyl-directed DNA mismatch repair. May act as a 'molecular matchmaker', a protein that promotes the formation of a stable complex between two or more DNA-binding proteins in an ATP-dependent manner without itself being part of a final effector complex. The chain is DNA mismatch repair protein MutL from Enterobacter sp. (strain 638).